The primary structure comprises 215 residues: Ribulose-phosphate 3-epimerase (215 aa).

Residue Ser-13 coordinates substrate. The a divalent metal cation site is built by His-38, Asp-40, His-69, and Asp-175. The active-site Proton acceptor is Asp-40. Residues His-69, 175 to 177 (DGG), and 196 to 197 (GS) each bind substrate. The active-site Proton donor is Asp-175.

The protein belongs to the ribulose-phosphate 3-epimerase family. The cofactor is a divalent metal cation.

It carries out the reaction D-ribulose 5-phosphate = D-xylulose 5-phosphate. It functions in the pathway carbohydrate degradation. Functionally, catalyzes the reversible epimerization of D-ribulose 5-phosphate to D-xylulose 5-phosphate. The polypeptide is Ribulose-phosphate 3-epimerase (Mycoplasma pneumoniae (strain ATCC 29342 / M129 / Subtype 1) (Mycoplasmoides pneumoniae)).